The primary structure comprises 82 residues: UPF0154 protein SPD_1662 (82 aa).

The chain crosses the membrane as a helical span at residues 5-25; the sequence is LAIVLIVLAFLGGALGGMYLV.

Belongs to the UPF0154 family.

It localises to the cell membrane. The polypeptide is UPF0154 protein SPD_1662 (Streptococcus pneumoniae serotype 2 (strain D39 / NCTC 7466)).